Here is a 325-residue protein sequence, read N- to C-terminus: Tetraacyldisaccharide 4'-kinase (325 aa).

Position 55–62 (55–62 (TAGGNGKT)) interacts with ATP.

The protein belongs to the LpxK family.

The catalysed reaction is a lipid A disaccharide + ATP = a lipid IVA + ADP + H(+). The protein operates within glycolipid biosynthesis; lipid IV(A) biosynthesis; lipid IV(A) from (3R)-3-hydroxytetradecanoyl-[acyl-carrier-protein] and UDP-N-acetyl-alpha-D-glucosamine: step 6/6. Transfers the gamma-phosphate of ATP to the 4'-position of a tetraacyldisaccharide 1-phosphate intermediate (termed DS-1-P) to form tetraacyldisaccharide 1,4'-bis-phosphate (lipid IVA). The polypeptide is Tetraacyldisaccharide 4'-kinase (Salmonella dublin (strain CT_02021853)).